We begin with the raw amino-acid sequence, 153 residues long: Small ribosomal subunit protein uS19 (153 aa).

A unknown region spans residues 1–63; the sequence is MGFRGAWNKR…QEIWDEFRAF (63 aa). Residues 64–153 form a small ribosomal subunit protein uS19 region; the sequence is VNKKAWVDPK…EKSAKVVKKK (90 aa).

This sequence belongs to the universal ribosomal protein uS19 family.

Its function is as follows. Protein S19 forms a complex with S13 that binds strongly to the 16S ribosomal RNA. The protein is Small ribosomal subunit protein uS19 of Hydrogenobaculum sp. (strain Y04AAS1).